The following is a 124-amino-acid chain: Small polypeptide ROTUNDIFOLIA LIKE 3 (124 aa).

The interval Met-1 to Ser-23 is disordered. N-linked (GlcNAc...) asparagine glycosylation is found at Asn-35 and Asn-38. The helical transmembrane segment at Ala-59 to Ser-75 threads the bilayer. The interval Trp-60–Lys-95 is disordered. A compositionally biased stretch (low complexity) spans Ser-71–Gln-91. Asn-88 carries N-linked (GlcNAc...) asparagine glycosylation. A required for DVL/RTFL small polypeptide activity region spans residues Arg-92 to Tyr-124.

This sequence belongs to the DVL/RTFL small polypeptides family.

The protein localises to the cell membrane. In terms of biological role, small polypeptide acting as a regulatory molecule which coordinates cellular responses required for differentiation, growth and development, probably by restricting polar cell proliferation in lateral organs (e.g. leaves and petioles). The chain is Small polypeptide ROTUNDIFOLIA LIKE 3 from Oryza sativa subsp. japonica (Rice).